Here is a 197-residue protein sequence, read N- to C-terminus: NADH-quinone oxidoreductase subunit C (197 aa).

This sequence belongs to the complex I 30 kDa subunit family. NDH-1 is composed of 14 different subunits. Subunits NuoB, C, D, E, F, and G constitute the peripheral sector of the complex.

The protein resides in the cell inner membrane. The catalysed reaction is a quinone + NADH + 5 H(+)(in) = a quinol + NAD(+) + 4 H(+)(out). Functionally, NDH-1 shuttles electrons from NADH, via FMN and iron-sulfur (Fe-S) centers, to quinones in the respiratory chain. The immediate electron acceptor for the enzyme in this species is believed to be ubiquinone. Couples the redox reaction to proton translocation (for every two electrons transferred, four hydrogen ions are translocated across the cytoplasmic membrane), and thus conserves the redox energy in a proton gradient. This is NADH-quinone oxidoreductase subunit C from Neisseria meningitidis serogroup A / serotype 4A (strain DSM 15465 / Z2491).